The following is a 284-amino-acid chain: MEMO1 family protein MmarC6_1286 (284 aa).

Belongs to the MEMO1 family.

This is MEMO1 family protein MmarC6_1286 from Methanococcus maripaludis (strain C6 / ATCC BAA-1332).